Here is a 388-residue protein sequence, read N- to C-terminus: Protein FAM199X (388 aa).

The span at 288–312 shows a compositional bias: low complexity; sequence SMVSSASSSGSSVGNSASNSSANMS. The interval 288-358 is disordered; sequence SMVSSASSSG…QLKEQRQARK (71 aa). 2 positions are modified to phosphoserine: serine 316 and serine 321. The segment covering 330 to 349 has biased composition (basic residues); sequence DSKKRSKQRKLQQKAFRKRQ.

The protein belongs to the FAM199 family.

This Mus musculus (Mouse) protein is Protein FAM199X (Fam199x).